Consider the following 227-residue polypeptide: Cytochrome c oxidase subunit 2 (227 aa).

Topologically, residues 1-14 are mitochondrial intermembrane; sequence MPYPMQLGFQDATS. A helical transmembrane segment spans residues 15–45; the sequence is PIMEELTYFHDHTLMIVFLISSLVLYIIILM. At 46–59 the chain is on the mitochondrial matrix side; that stretch reads LTTKLTHTSTMDAQ. A helical membrane pass occupies residues 60–87; that stretch reads EVETIWTILPAVILVLIALPSLRILYMM. Residues 88–227 are Mitochondrial intermembrane-facing; that stretch reads DEIYNPYLTI…YFEKWSSMMQ (140 aa). Cu cation-binding residues include His161, Cys196, Glu198, Cys200, His204, and Met207. Position 198 (Glu198) interacts with Mg(2+). Tyr218 bears the Phosphotyrosine mark.

The protein belongs to the cytochrome c oxidase subunit 2 family. As to quaternary structure, component of the cytochrome c oxidase (complex IV, CIV), a multisubunit enzyme composed of 14 subunits. The complex is composed of a catalytic core of 3 subunits MT-CO1, MT-CO2 and MT-CO3, encoded in the mitochondrial DNA, and 11 supernumerary subunits COX4I, COX5A, COX5B, COX6A, COX6B, COX6C, COX7A, COX7B, COX7C, COX8 and NDUFA4, which are encoded in the nuclear genome. The complex exists as a monomer or a dimer and forms supercomplexes (SCs) in the inner mitochondrial membrane with NADH-ubiquinone oxidoreductase (complex I, CI) and ubiquinol-cytochrome c oxidoreductase (cytochrome b-c1 complex, complex III, CIII), resulting in different assemblies (supercomplex SCI(1)III(2)IV(1) and megacomplex MCI(2)III(2)IV(2)). Found in a complex with TMEM177, COA6, COX18, COX20, SCO1 and SCO2. Interacts with TMEM177 in a COX20-dependent manner. Interacts with COX20. Interacts with COX16. Cu cation serves as cofactor.

The protein localises to the mitochondrion inner membrane. The catalysed reaction is 4 Fe(II)-[cytochrome c] + O2 + 8 H(+)(in) = 4 Fe(III)-[cytochrome c] + 2 H2O + 4 H(+)(out). Functionally, component of the cytochrome c oxidase, the last enzyme in the mitochondrial electron transport chain which drives oxidative phosphorylation. The respiratory chain contains 3 multisubunit complexes succinate dehydrogenase (complex II, CII), ubiquinol-cytochrome c oxidoreductase (cytochrome b-c1 complex, complex III, CIII) and cytochrome c oxidase (complex IV, CIV), that cooperate to transfer electrons derived from NADH and succinate to molecular oxygen, creating an electrochemical gradient over the inner membrane that drives transmembrane transport and the ATP synthase. Cytochrome c oxidase is the component of the respiratory chain that catalyzes the reduction of oxygen to water. Electrons originating from reduced cytochrome c in the intermembrane space (IMS) are transferred via the dinuclear copper A center (CU(A)) of subunit 2 and heme A of subunit 1 to the active site in subunit 1, a binuclear center (BNC) formed by heme A3 and copper B (CU(B)). The BNC reduces molecular oxygen to 2 water molecules using 4 electrons from cytochrome c in the IMS and 4 protons from the mitochondrial matrix. The sequence is that of Cytochrome c oxidase subunit 2 (MT-CO2) from Osphranter robustus (Wallaroo).